The primary structure comprises 102 residues: Large ribosomal subunit protein uL23c (102 aa).

The protein belongs to the universal ribosomal protein uL23 family. As to quaternary structure, part of the 50S ribosomal subunit.

It is found in the plastid. Its subcellular location is the chloroplast. Binds to 23S rRNA. The polypeptide is Large ribosomal subunit protein uL23c (rpl23) (Phaeodactylum tricornutum (strain CCAP 1055/1)).